A 105-amino-acid polypeptide reads, in one-letter code: Large ribosomal subunit protein bL21 (105 aa).

This sequence belongs to the bacterial ribosomal protein bL21 family. As to quaternary structure, part of the 50S ribosomal subunit. Contacts protein L20.

This protein binds to 23S rRNA in the presence of protein L20. The protein is Large ribosomal subunit protein bL21 of Desulfatibacillum aliphaticivorans.